The sequence spans 196 residues: Kunitz trypsin inhibitor 5 (196 aa).

The N-terminal stretch at 1-19 (MSSLLYIFLLLAVFISHRG) is a signal peptide. Cysteine 156 and cysteine 167 form a disulfide bridge.

The protein belongs to the protease inhibitor I3 (leguminous Kunitz-type inhibitor) family.

It is found in the endoplasmic reticulum. In terms of biological role, can inhibit both serine proteases and cysteine proteases. May be involved in the modulation of the proteases that participate in the hydrolysis of dietary proteins in the gut of spider mites. The protein is Kunitz trypsin inhibitor 5 of Arabidopsis thaliana (Mouse-ear cress).